We begin with the raw amino-acid sequence, 333 residues long: Glycerol-3-phosphate dehydrogenase [NAD(P)+] (333 aa).

Residues Trp13, Lys33, and Lys108 each coordinate NADPH. The sn-glycerol 3-phosphate site is built by Lys108 and Gly138. Residue Ser142 participates in NADPH binding. 5 residues coordinate sn-glycerol 3-phosphate: Lys193, Asp246, Ser256, Arg257, and Asn258. Lys193 acts as the Proton acceptor in catalysis. Arg257 provides a ligand contact to NADPH. The NADPH site is built by Val281 and Glu283.

It belongs to the NAD-dependent glycerol-3-phosphate dehydrogenase family.

The protein resides in the cytoplasm. The enzyme catalyses sn-glycerol 3-phosphate + NAD(+) = dihydroxyacetone phosphate + NADH + H(+). It carries out the reaction sn-glycerol 3-phosphate + NADP(+) = dihydroxyacetone phosphate + NADPH + H(+). Its pathway is membrane lipid metabolism; glycerophospholipid metabolism. Catalyzes the reduction of the glycolytic intermediate dihydroxyacetone phosphate (DHAP) to sn-glycerol 3-phosphate (G3P), the key precursor for phospholipid synthesis. This is Glycerol-3-phosphate dehydrogenase [NAD(P)+] from Bifidobacterium longum subsp. infantis (strain ATCC 15697 / DSM 20088 / JCM 1222 / NCTC 11817 / S12).